The primary structure comprises 699 residues: Probable xyloglucan glycosyltransferase 12 (699 aa).

2 helical membrane-spanning segments follow: residues Cys126–Phe146 and Ile194–Ile214. Residue Asp280 is part of the active site. The substrate site is built by Asp339 and Asp341. Asp433 is an active-site residue. 2 helical membrane-spanning segments follow: residues Leu511–Val531 and Leu536–Ala556. Residues Glu616–His646 form a disordered region. Glycyl lysine isopeptide (Lys-Gly) (interchain with G-Cter in ubiquitin) cross-links involve residues Lys617 and Lys620. Phosphoserine is present on Ser626. A compositionally biased stretch (basic residues) spans Glu637–His646. A run of 2 helical transmembrane segments spans residues Ile649–Leu668 and Ile674–Ile694.

This sequence belongs to the glycosyltransferase 2 family. Plant cellulose synthase-like C subfamily. In terms of assembly, homodimer. In terms of tissue distribution, mainly expressed in roots, flowers and seeds, and, at very low levels, in seedlings, leaves and stems.

Its subcellular location is the golgi apparatus membrane. Probable beta-1,4-glucan synthase rather involved in the synthesis of the xyloglucan backbone than cellulose. Seems to work simultaneously with xyloglucan 6-xylosyltransferase. Xyloglucan is a noncellulosic polysaccharides of plant cell wall and consists of a glucan backbone substituted by xylose, galactose and fucose. The polypeptide is Probable xyloglucan glycosyltransferase 12 (Arabidopsis thaliana (Mouse-ear cress)).